Here is a 448-residue protein sequence, read N- to C-terminus: Adenylosuccinate synthetase (448 aa).

GTP is bound by residues 36-42 (GDEGKGK) and 64-66 (GHT). Asp37 functions as the Proton acceptor in the catalytic mechanism. Mg(2+) is bound by residues Asp37 and Gly64. Residues 37-40 (DEGK), 62-65 (NAGH), Thr154, Arg168, Asn246, Thr261, and Arg325 contribute to the IMP site. Residue His65 is the Proton donor of the active site. 321-327 (VTTKRKR) serves as a coordination point for substrate. Residues Arg327, 353–355 (KLD), and 436–438 (GVG) each bind GTP.

The protein belongs to the adenylosuccinate synthetase family. In terms of assembly, homodimer. Requires Mg(2+) as cofactor.

Its subcellular location is the cytoplasm. It catalyses the reaction IMP + L-aspartate + GTP = N(6)-(1,2-dicarboxyethyl)-AMP + GDP + phosphate + 2 H(+). It participates in purine metabolism; AMP biosynthesis via de novo pathway; AMP from IMP: step 1/2. Its function is as follows. Plays an important role in the de novo pathway and in the salvage pathway of purine nucleotide biosynthesis. Catalyzes the first committed step in the biosynthesis of AMP from IMP. This chain is Adenylosuccinate synthetase, found in Drosophila pseudoobscura pseudoobscura (Fruit fly).